The following is a 525-amino-acid chain: Penton protein (525 aa).

A disordered region spans residues 1–47; it reads MWGLQPPTSIPPPPPPTELTPSTYPAMVNGYPPPAASAQSCSSSGGQ. Residues 8-18 are compositionally biased toward pro residues; sequence TSIPPPPPPTE. Low complexity predominate over residues 36–47; the sequence is ASAQSCSSSGGQ.

The protein belongs to the adenoviridae penton family. Interacts with the fiber protein (via N-terminal tail region). Interacts with the capsid vertex protein; this interaction binds the penton base to neighboring peripentonal hexons.

It is found in the virion. It localises to the host nucleus. Its function is as follows. Major capsid protein that self-associates to form penton base pentamers, each in the shape of a pentagon, situated at the 12 vertices of the pseudo T=25 capsid. Involved in virus secondary attachment to host cell after initial attachment by the fiber protein, and in endocytosis of virions. As the virus enters the host cell, penton proteins are shed concomitant with virion acidification in the endosome. The chain is Penton protein from Galliformes (FAdV-10).